Here is a 138-residue protein sequence, read N- to C-terminus: Spermidine export protein MdtJ (138 aa).

4 consecutive transmembrane segments (helical) span residues 1 to 21 (MIYW…TLSM), 30 to 50 (VVGM…LAMA), 54 to 74 (VALG…ITVF), and 81 to 101 (ESLS…IMLI).

The protein belongs to the drug/metabolite transporter (DMT) superfamily. Small multidrug resistance (SMR) (TC 2.A.7.1) family. MdtJ subfamily. Forms a complex with MdtI.

It is found in the cell inner membrane. In terms of biological role, catalyzes the excretion of spermidine. This chain is Spermidine export protein MdtJ, found in Photorhabdus laumondii subsp. laumondii (strain DSM 15139 / CIP 105565 / TT01) (Photorhabdus luminescens subsp. laumondii).